The primary structure comprises 170 residues: uncharacterized protein (170 aa).

Topologically, residues 1–15 (MFLTSPFESCIVLSS) are cytoplasmic. The helical transmembrane segment at 16–36 (LIAGLLFSLSTGFVGILGVFA) threads the bilayer. The Extracellular segment spans residues 37 to 76 (SLFETELSVSPKRLSLSSLSWPKTFWALLSSVEGVSWESS). The helical transmembrane segment at 77–97 (LFACIVGCCFAVTVIASLSAS) threads the bilayer. Over 98–119 (RVFGTVASSFRDSSCCCDSSPA) the chain is Cytoplasmic. Residues 120-140 (VSVLATPATAALALLSLLLSL) form a helical membrane-spanning segment. The Extracellular portion of the chain corresponds to 141 to 170 (PCWSTSTEAFTVDPSPSVFSMLANRITIGL).

It localises to the membrane. This is an uncharacterized protein from Saccharomyces cerevisiae (strain ATCC 204508 / S288c) (Baker's yeast).